The primary structure comprises 624 residues: Adenine deaminase 1 (624 aa).

Belongs to the metallo-dependent hydrolases superfamily. Adenine deaminase family. Mn(2+) is required as a cofactor.

It catalyses the reaction adenine + H2O + H(+) = hypoxanthine + NH4(+). The chain is Adenine deaminase 1 from Bradyrhizobium sp. (strain ORS 278).